The chain runs to 181 residues: Probable pyruvoyl-dependent arginine decarboxylase (181 aa).

Residue S43 is modified to Pyruvic acid (Ser).

Belongs to the PdaD family. Pyruvate serves as cofactor.

The catalysed reaction is L-arginine + H(+) = agmatine + CO2. The chain is Probable pyruvoyl-dependent arginine decarboxylase from Prosthecochloris aestuarii (strain DSM 271 / SK 413).